The sequence spans 423 residues: Pleckstrin homology domain-containing family O member 1 (423 aa).

Disordered regions lie at residues 1 to 21, 81 to 100, and 217 to 277; these read MEKN…SAQP, RKSK…AHSR, and LAAG…HSEK. The span at 7-20 shows a compositional bias: polar residues; the sequence is AKRGQQDGNQQSAQ. A PH domain is found at 20 to 131; the sequence is QPEKVGWVRK…WINALNSAIT (112 aa). Residues 83 to 92 show a composition bias toward basic residues; that stretch reads SKSRSKKNHS. Residues 222–259 are compositionally biased toward basic and acidic residues; it reads RRSDSENVKLSEKGRSGTLPRHEVTSWDKPTQRKDSLD.

C-terminal fragments could be released during apoptosis via caspase-3-dependent cleavage.

The protein resides in the membrane. It is found in the nucleus. The protein localises to the cytoplasm. Plays a role in the regulation of the actin cytoskeleton through its interactions with actin capping protein (CP). The polypeptide is Pleckstrin homology domain-containing family O member 1 (PLEKHO1) (Gallus gallus (Chicken)).